The primary structure comprises 751 residues: Catalase-peroxidase 1 (751 aa).

Over residues 1–11 (MTDKQHTRSVS) the composition is skewed to basic and acidic residues. The interval 1-31 (MTDKQHTRSVSESENPAIPSPTPKVSRPRRN) is disordered. The segment at residues 103-225 (WHAAGTYRIA…LANVQMGLIY (123 aa)) is a cross-link (tryptophyl-tyrosyl-methioninium (Trp-Tyr) (with M-251)). The Proton acceptor role is filled by His-104. Residues 225–251 (YVNPEGPGGNPDPLAAARDIRETFARM) constitute a cross-link (tryptophyl-tyrosyl-methioninium (Tyr-Met) (with W-103)). Residue His-266 participates in heme b binding. The segment at 345 to 375 (AGAKQWKPKNPEANDTVPDAHGASRRHSPTM) is disordered.

The protein belongs to the peroxidase family. Peroxidase/catalase subfamily. As to quaternary structure, homodimer or homotetramer. The cofactor is heme b. Formation of the three residue Trp-Tyr-Met cross-link is important for the catalase, but not the peroxidase activity of the enzyme.

It carries out the reaction H2O2 + AH2 = A + 2 H2O. It catalyses the reaction 2 H2O2 = O2 + 2 H2O. Functionally, bifunctional enzyme with both catalase and broad-spectrum peroxidase activity. This Cupriavidus pinatubonensis (strain JMP 134 / LMG 1197) (Cupriavidus necator (strain JMP 134)) protein is Catalase-peroxidase 1.